Reading from the N-terminus, the 924-residue chain is Alpha-actinin, sarcomeric (924 aa).

The actin-binding stretch occupies residues 1–250 (MMMENGLSME…IMTYVSCYYH (250 aa)). Calponin-homology (CH) domains are found at residues 34-138 (KQQK…LRFA) and 147-253 (MTAK…HAFQ). Spectrin repeat units follow at residues 251-395 (AFQG…TVSD), 396-510 (ISNS…RCQR), 511-631 (ICDQ…TAND), and 632-744 (MTRK…TMET). EF-hand domains lie at 778-813 (EQLN…LGYS) and 819-854 (QGDL…ESTD). Residues aspartate 791, asparagine 793, threonine 795, arginine 797, and glutamate 802 each coordinate Ca(2+).

This sequence belongs to the alpha-actinin family. Homodimer; antiparallel. Interacts with Smn; the interaction occurs in adult thoracic tissues. As to expression, larval muscle isoform is expressed in the larval body wall, adult muscles of the head and abdomen and supercontractile muscles of the larva and adult. Adult muscle isoform accumulates within adult fibrillar and tubular muscles.

The protein localises to the cytoplasm. The protein resides in the myofibril. Its subcellular location is the sarcomere. It is found in the z line. In terms of biological role, F-actin cross-linking protein which is thought to anchor actin to a variety of intracellular structures. This is a bundling protein. This chain is Alpha-actinin, sarcomeric (Actn), found in Drosophila melanogaster (Fruit fly).